An 80-amino-acid polypeptide reads, in one-letter code: NAD(P)H-quinone oxidoreductase subunit O (80 aa).

Belongs to the complex I NdhO subunit family. As to quaternary structure, NDH-1 can be composed of about 15 different subunits; different subcomplexes with different compositions have been identified which probably have different functions.

It is found in the cellular thylakoid membrane. The catalysed reaction is a plastoquinone + NADH + (n+1) H(+)(in) = a plastoquinol + NAD(+) + n H(+)(out). The enzyme catalyses a plastoquinone + NADPH + (n+1) H(+)(in) = a plastoquinol + NADP(+) + n H(+)(out). Functionally, NDH-1 shuttles electrons from an unknown electron donor, via FMN and iron-sulfur (Fe-S) centers, to quinones in the respiratory and/or the photosynthetic chain. The immediate electron acceptor for the enzyme in this species is believed to be plastoquinone. Couples the redox reaction to proton translocation, and thus conserves the redox energy in a proton gradient. Cyanobacterial NDH-1 also plays a role in inorganic carbon-concentration. The chain is NAD(P)H-quinone oxidoreductase subunit O from Prochlorococcus marinus subsp. pastoris (strain CCMP1986 / NIES-2087 / MED4).